We begin with the raw amino-acid sequence, 35 residues long: Photosystem II reaction center protein T (35 aa).

Residues 3 to 23 (SVAYILIFTLCIGTIFFAIAF) form a helical membrane-spanning segment.

The protein belongs to the PsbT family. In terms of assembly, PSII is composed of 1 copy each of membrane proteins PsbA, PsbB, PsbC, PsbD, PsbE, PsbF, PsbH, PsbI, PsbJ, PsbK, PsbL, PsbM, PsbT, PsbX, PsbY, PsbZ, Psb30/Ycf12, peripheral proteins PsbO, CyanoQ (PsbQ), PsbU, PsbV and a large number of cofactors. It forms dimeric complexes.

The protein localises to the cellular thylakoid membrane. In terms of biological role, found at the monomer-monomer interface of the photosystem II (PS II) dimer, plays a role in assembly and dimerization of PSII. PSII is a light-driven water plastoquinone oxidoreductase, using light energy to abstract electrons from H(2)O, generating a proton gradient subsequently used for ATP formation. The polypeptide is Photosystem II reaction center protein T (Nostoc punctiforme (strain ATCC 29133 / PCC 73102)).